Here is a 265-residue protein sequence, read N- to C-terminus: Protein IL-40 (265 aa).

Positions 1-20 (MGLPGLFCLAVLAASSFSKA) are cleaved as a signal peptide. 2 N-linked (GlcNAc...) asparagine glycosylation sites follow: asparagine 86 and asparagine 132.

As to expression, expressed in fetal liver and bone marrow. Expressed in peripheral blood lymphocyte B cells.

The protein resides in the secreted. Functionally, probable B cell-associated cytokine that plays a role in the regulation of humoral immune responses. Involved in lymphocyte B cell development and immunoglobulin/IgA production. The chain is Protein IL-40 from Homo sapiens (Human).